The primary structure comprises 229 residues: Large ribosomal subunit protein uL1 (229 aa).

Belongs to the universal ribosomal protein uL1 family. As to quaternary structure, part of the 50S ribosomal subunit.

In terms of biological role, binds directly to 23S rRNA. The L1 stalk is quite mobile in the ribosome, and is involved in E site tRNA release. Functionally, protein L1 is also a translational repressor protein, it controls the translation of the L11 operon by binding to its mRNA. The chain is Large ribosomal subunit protein uL1 from Bifidobacterium animalis subsp. lactis (strain AD011).